Here is a 195-residue protein sequence, read N- to C-terminus: NADH-quinone oxidoreductase subunit I (195 aa).

4Fe-4S ferredoxin-type domains lie at 44–74 (LNRY…VEGA) and 90–119 (QVYQ…MTNE). Residues Cys54, Cys57, Cys60, Cys64, Cys99, Cys102, Cys105, and Cys109 each contribute to the [4Fe-4S] cluster site. A disordered region spans residues 145 to 195 (MTAPPHALRPGTTQDDYYRGDITAVPEQAAPEQAAPEQPAPEREPNPETEK). The span at 168 to 181 (AVPEQAAPEQAAPE) shows a compositional bias: low complexity. Basic and acidic residues predominate over residues 184–195 (APEREPNPETEK).

The protein belongs to the complex I 23 kDa subunit family. NDH-1 is composed of 14 different subunits. Subunits NuoA, H, J, K, L, M, N constitute the membrane sector of the complex. It depends on [4Fe-4S] cluster as a cofactor.

It is found in the cell membrane. The catalysed reaction is a quinone + NADH + 5 H(+)(in) = a quinol + NAD(+) + 4 H(+)(out). Functionally, NDH-1 shuttles electrons from NADH, via FMN and iron-sulfur (Fe-S) centers, to quinones in the respiratory chain. The immediate electron acceptor for the enzyme in this species is believed to be ubiquinone. Couples the redox reaction to proton translocation (for every two electrons transferred, four hydrogen ions are translocated across the cytoplasmic membrane), and thus conserves the redox energy in a proton gradient. The chain is NADH-quinone oxidoreductase subunit I from Rhodococcus erythropolis (strain PR4 / NBRC 100887).